The primary structure comprises 78 residues: Neurotoxin 3FTx-LK (78 aa).

Residues 1-21 (MKTLLLTLVVVTIVCLDLGYT) form the signal peptide. 4 disulfide bridges follow: C24-C42, C35-C60, C64-C70, and C71-C76.

Expressed by the venom gland.

Its subcellular location is the secreted. Its function is as follows. Blocks both the muscle-twitch response to nerve stimulation and the response to exogenous acetylcholine. The sequence is that of Neurotoxin 3FTx-LK from Bungarus fasciatus (Banded krait).